Here is an 856-residue protein sequence, read N- to C-terminus: V-type proton ATPase 116 kDa subunit a 2 (856 aa).

At 1 to 393 (MGSLFRSESM…DAYGVGSYRE (393 aa)) the chain is on the cytoplasmic side. Residues 394–412 (VNPALFTIITFPFLFAVMF) traverse the membrane as a helical segment. The Vacuolar portion of the chain corresponds to 413–414 (GD). Residues 415 to 431 (FGHGFVMFLFALLLVLN) form a helical membrane-spanning segment. Over 432–445 (ENHPRLSQSQEILR) the chain is Cytoplasmic. Residues 446-475 (MFFDGRYILLLMGLFSVYTGLIYNDCFSKS) traverse the membrane as a helical segment. Residues 476–549 (VNLFGSGWNV…ATNRLTFLNS (74 aa)) lie on the Vacuolar side of the membrane. The helical transmembrane segment at 550-569 (FKMKMSVILGIFHMTFGVVL) threads the bilayer. The Cytoplasmic portion of the chain corresponds to 570-587 (GIFNHLHFRKKFNVYLVS). Residues 588–608 (VPEILFMLCIFGYLIFMIIYK) form a helical membrane-spanning segment. Over 609-651 (WLAYSAETSREAPSILIEFINMFLFPTSKTHGLYPGQAHVQRV) the chain is Vacuolar. A helical membrane pass occupies residues 652–671 (LVALTVLAVPVLFLGKPLFL). The Cytoplasmic portion of the chain corresponds to 672 to 739 (LWLHNGRNCF…EILMTQAIHS (68 aa)). Phosphoserine is present on residues S695 and S700. A helical transmembrane segment spans residues 740 to 764 (IEYCLGCISNTASYLRLWALSLAHA). Residues 765–785 (QLSDVLWAMLMRVGLRVDTTY) lie on the Vacuolar side of the membrane. The chain crosses the membrane as a helical span at residues 786–824 (GVLLLLPVMAFFAVLTIFILLVMEGLSAFLHAIRLHWVE). Residues 825–856 (FQNKFYVGAGTKFVPFSFSLLSSKFSNDDSIA) lie on the Cytoplasmic side of the membrane.

This sequence belongs to the V-ATPase 116 kDa subunit family. As to quaternary structure, V-ATPase is a heteromultimeric enzyme made up of two complexes: the ATP-hydrolytic V1 complex and the proton translocation V0 complex. The V1 complex consists of three catalytic AB heterodimers that form a heterohexamer, three peripheral stalks each consisting of EG heterodimers, one central rotor including subunits D and F, and the regulatory subunits C and H. The proton translocation complex V0 consists of the proton transport subunit a, a ring of proteolipid subunits c9c'', rotary subunit d, subunits e and f, and the accessory subunits ATP6AP1/Ac45 and ATP6AP2/PRR. Directly interacts with PSCD2 through its N-terminal cytosolic tail in an intra-endosomal acidification-dependent manner. Disruption of this interaction results in the inhibition of endocytosis. Interacts with SPAAR. Relatively high expression in kidney and liver. Lower levels in the spleen, testis, and skeletal muscle. Also expressed in the thymus.

Its subcellular location is the cell membrane. It localises to the endosome membrane. Functionally, subunit of the V0 complex of vacuolar(H+)-ATPase (V-ATPase), a multisubunit enzyme composed of a peripheral complex (V1) that hydrolyzes ATP and a membrane integral complex (V0) that translocates protons. V-ATPase is responsible for acidifying and maintaining the pH of intracellular compartments and in some cell types, is targeted to the plasma membrane, where it is responsible for acidifying the extracellular environment. Essential component of the endosomal pH-sensing machinery. May play a role in maintaining the Golgi functions, such as glycosylation maturation, by controlling the Golgi pH. In aerobic conditions, involved in intracellular iron homeostasis, thus triggering the activity of Fe(2+) prolyl hydroxylase (PHD) enzymes, and leading to HIF1A hydroxylation and subsequent proteasomal degradation. The chain is V-type proton ATPase 116 kDa subunit a 2 (Atp6v0a2) from Mus musculus (Mouse).